We begin with the raw amino-acid sequence, 554 residues long: Terpene synthase 17 (554 aa).

D306, D310, and E458 together coordinate Mg(2+). A DDXXD motif motif is present at residues 306–310; sequence DDTYD.

The protein belongs to the terpene synthase family. Tpsa subfamily. It depends on Mg(2+) as a cofactor. Requires Mn(2+) as cofactor. As to expression, mostly expressed in stem and trichomes, to a lower extent in leaves, flowers and roots and, at low levels, in fruits.

It catalyses the reaction (2Z,6Z)-farnesyl diphosphate = beta-bisabolene + diphosphate. The catalysed reaction is (2E,6E)-farnesyl diphosphate = (+)-valencene + diphosphate. It carries out the reaction (2E,6E)-farnesyl diphosphate = (E)-beta-farnesene + diphosphate. The enzyme catalyses (2E,6E)-farnesyl diphosphate = gamma-gurjunene + diphosphate. It catalyses the reaction (2Z,6Z)-farnesyl diphosphate = (E)-gamma-bisabolene + diphosphate. The catalysed reaction is (2E)-geranyl diphosphate = limonene + diphosphate. It carries out the reaction (2E)-geranyl diphosphate = beta-myrcene + diphosphate. The enzyme catalyses (2E)-geranyl diphosphate = (E)-beta-ocimene + diphosphate. It catalyses the reaction (2E)-geranyl diphosphate = terpinolene + diphosphate. The catalysed reaction is (2E)-geranyl diphosphate = gamma-terpinene + diphosphate. It carries out the reaction (2Z,6Z)-farnesyl diphosphate = (Z)-gamma-bisabolene + diphosphate. The enzyme catalyses (2E,6E)-farnesyl diphosphate = (1S,5S,6R)-alpha-bergamotene + diphosphate. It catalyses the reaction (2Z,6Z)-farnesyl diphosphate = (1S,5S,6S)-alpha-bergamotene + diphosphate. Its pathway is secondary metabolite biosynthesis; terpenoid biosynthesis. Sesquiterpene synthase involved in the biosynthesis of volatile compounds. Mediates the conversion of (2E,6E)-farnesyl diphosphate (FPP) into gamma-gurjunene, (E)-beta-farnesene and (+)-valencene, and of (2Z,6Z)-farnesyl diphosphate ((ZZ)-FPP) into (E)-alpha-bergamotene and (Z)-gamma-bisabolene as well as beta-bisabolene, (Z)-alpha-bergamotene and (E)-gamma-bisabolene to a lower extent. Can act with a low efficiency as a monoterpene synthase with geranyl diphosphate (GPP) as substrate, thus producing beta-myrcene, (E)-beta-ocimene, limonene, terpinolene, gamma-terpinene and (Z)-beta-ocimene. The sequence is that of Terpene synthase 17 from Solanum lycopersicum (Tomato).